The chain runs to 508 residues: UTP--glucose-1-phosphate uridylyltransferase (508 aa).

Ser2 carries the N-acetylserine modification. 2 positions are modified to phosphoserine: Ser2 and Ser13. Residues 113–116 (LNGG), Lys127, Gln190, and Gly222 each bind UTP. 115–116 (GG) is a substrate binding site. Lys127 is a binding site for Mg(2+). Substrate contacts are provided by residues His223, 251 to 253 (NID), and Asn330. Asp253 serves as a coordination point for UTP. Asp253 provides a ligand contact to Mg(2+). UTP is bound at residue Lys396. Residue Lys396 is part of the active site. Position 426 is a phosphothreonine (Thr426). Ser434 carries the phosphoserine modification. Lys438 carries the post-translational modification N6-acetyllysine. A phosphoserine mark is found at Ser448 and Ser461. The oligomerization stretch occupies residues 457-508 (HLTVSGDVTFGKNVSLKGTVIIIANHGDRIDIPPGAVLENKIVSGNLRILDH). Positions 502-503 (NL) are critical for end-to-end subunit interaction.

The protein belongs to the UDPGP type 1 family. Homooctamer. Highly expressed in various brain regions. Expressed in amygdala, anterior cingulate cortex, caudate, cerebellar hemisphere, cerebellum, cortex, frontal cortex, hippocampus, hypothalamus, nucleus accumbens, putamen, spinal cord and substantia nigra. Also widely expressed among other tissues, including liver, heart, placenta, lung, kidney, pancreas and skeletal muscle.

The protein localises to the cytoplasm. The enzyme catalyses alpha-D-glucose 1-phosphate + UTP + H(+) = UDP-alpha-D-glucose + diphosphate. It functions in the pathway glycan biosynthesis; glycogen biosynthesis. In terms of biological role, UTP--glucose-1-phosphate uridylyltransferase catalyzing the conversion of glucose-1-phosphate into UDP-glucose, a crucial precursor for the production of glycogen. This Homo sapiens (Human) protein is UTP--glucose-1-phosphate uridylyltransferase.